A 165-amino-acid polypeptide reads, in one-letter code: Lipoprotein signal peptidase (165 aa).

The next 3 membrane-spanning stretches (helical) occupy residues tryptophan 12 to glutamine 32, tryptophan 70 to alanine 90, and alanine 102 to valine 122. Residues aspartate 123 and aspartate 141 contribute to the active site. A helical transmembrane segment spans residues phenylalanine 137–leucine 157.

The protein belongs to the peptidase A8 family.

It localises to the cell inner membrane. It carries out the reaction Release of signal peptides from bacterial membrane prolipoproteins. Hydrolyzes -Xaa-Yaa-Zaa-|-(S,diacylglyceryl)Cys-, in which Xaa is hydrophobic (preferably Leu), and Yaa (Ala or Ser) and Zaa (Gly or Ala) have small, neutral side chains.. Its pathway is protein modification; lipoprotein biosynthesis (signal peptide cleavage). Functionally, this protein specifically catalyzes the removal of signal peptides from prolipoproteins. This Cronobacter sakazakii (strain ATCC BAA-894) (Enterobacter sakazakii) protein is Lipoprotein signal peptidase.